Here is a 699-residue protein sequence, read N- to C-terminus: Extracellular matrix protein 2 (699 aa).

An N-terminal signal peptide occupies residues 1–20 (MKIAVLFCFFLLIIFQTDFG). The 58-residue stretch at 101–158 (GHCLVKGITMYNKAVWSPEPCTTCLCSDGRVLCDETMCHPQRCPQTVIPEGECCPVCS) folds into the VWFC domain. Residues 176-186 (EFSGDSSEQRE) are compositionally biased toward basic and acidic residues. Residues 176–316 (EFSGDSSEQR…PAPPRGTLRL (141 aa)) form a disordered region. Residues 212–224 (QSEEDEEVKEEDT) show a composition bias toward acidic residues. The segment covering 243-260 (GDSRGGDRKQRPGEERRL) has biased composition (basic and acidic residues). Residues 270-291 (EEEEDEEEEGEEGEEDEEDEED) are compositionally biased toward acidic residues. The short motif at 294 to 296 (RGD) is the Cell attachment site element. An LRRNT domain is found at 307–344 (PAPPRGTLRLPSGCSLSYRTISCINAMLTQIPPLTAPQ). LRR repeat units follow at residues 368–388 (NLER…GPKA), 394–415 (KLMR…LPST), 416–436 (LEEL…SLSD), 439–459 (QLVT…NPLA), 465–484 (SLAY…QGLP), 486–507 (SIEE…CFNH), 510–530 (KINV…APLA), 536–557 (NLES…LPKS), 558–578 (LLHL…VFGH), 582–602 (GLEY…DRVS), 609–630 (SLRE…IQEM), 632–653 (ALHF…EICN), and 661–684 (NLEH…TFSC). Asn378 carries an N-linked (GlcNAc...) asparagine glycan. The N-linked (GlcNAc...) asparagine glycan is linked to Asn449. N-linked (GlcNAc...) asparagine glycosylation occurs at Asn506.

This sequence belongs to the small leucine-rich proteoglycan (SLRP) family. SLRP class I subfamily. In terms of assembly, interacts with numerous extracellular matrix proteins. Interacts with MSL1 and RASSF1. In terms of tissue distribution, expressed predominantly in adipose tissue as well as female-specific organs such as mammary gland, ovary, and uterus.

The protein localises to the secreted. Its subcellular location is the extracellular space. It localises to the extracellular matrix. Promotes matrix assembly and cell adhesiveness. This is Extracellular matrix protein 2 (ECM2) from Homo sapiens (Human).